Reading from the N-terminus, the 351-residue chain is MKNSNKLIASVVTLASVMALAACQSTNDNTKVISMKGDTISVSDFYNETKNTEVSQKAMLNLVISRVFEAQYGDKVSKKEVEKAYHKTAEQYGASFSAALAQSSLTPETFKRQIRSSKLVEYAVKEAAKKELTTQEYKKAYESYTPTMAVEMITLDNEETAKSVLEELKAEGADFTAIAKEKTTTPEKKVTYKFDSGATNVPTDVVKAASSLNEGGISDVISVLDPTSYQKKFYIVKVTKKAEKKSDWQEYKKRLKAIIIAEKSKDMNFQNKVIANALDKANVKIKDKAFANILAQYANLGQKTKAASESSTTSESSKAAEENPSESEQTQTSSAEEPTETEAQTQEPAAQ.

Residues 1-22 form the signal peptide; it reads MKNSNKLIASVVTLASVMALAA. The N-palmitoyl cysteine moiety is linked to residue Cys23. Residue Cys23 is the site of S-diacylglycerol cysteine attachment. The PpiC domain maps to 145-240; it reads TPTMAVEMIT…KKFYIVKVTK (96 aa). Composition is skewed to low complexity over residues 303-317 and 326-351; these read KTKA…SESS and ESEQ…PAAQ. The segment at 303-351 is disordered; that stretch reads KTKAASESSTTSESSKAAEENPSESEQTQTSSAEEPTETEAQTQEPAAQ.

This sequence belongs to the PrsA family.

The protein resides in the cell membrane. It catalyses the reaction [protein]-peptidylproline (omega=180) = [protein]-peptidylproline (omega=0). Functionally, plays a major role in protein secretion by helping the post-translocational extracellular folding of several secreted proteins. This is Foldase protein PrsA 1 (prsA1) from Streptococcus pyogenes serotype M1.